A 131-amino-acid chain; its full sequence is Predicted GPI-anchored protein 26 (131 aa).

The signal sequence occupies residues 1 to 18 (MHFSKIIAGSALSSVALA). Residues N22 and N104 are each glycosylated (N-linked (GlcNAc...) asparagine). G110 carries GPI-anchor amidated glycine lipidation. The propeptide at 111–131 (AGSKNVASALVGVVAIAAAMM) is removed in mature form.

It is found in the cell membrane. Its function is as follows. GPI-anchored protein involved in proper cell wall integrity. Does not seem to be directly involved in the synthesis of the cell wall. Required for normal virulence in a mouse model of disseminated candidiasis. The polypeptide is Predicted GPI-anchored protein 26 (PGA26) (Candida albicans (strain SC5314 / ATCC MYA-2876) (Yeast)).